A 426-amino-acid polypeptide reads, in one-letter code: Serine--tRNA ligase (426 aa).

Residues 103–129 (VPNLPDDSVPTGKDENDNPEIRRWGTP) form a disordered region. Residues 114-125 (GKDENDNPEIRR) are compositionally biased toward basic and acidic residues. 230 to 232 (TAE) provides a ligand contact to L-serine. ATP is bound at residue 261–263 (RSE). Glu284 is a binding site for L-serine. Position 348–351 (348–351 (EISS)) interacts with ATP. Ser384 lines the L-serine pocket.

It belongs to the class-II aminoacyl-tRNA synthetase family. Type-1 seryl-tRNA synthetase subfamily. In terms of assembly, homodimer. The tRNA molecule binds across the dimer.

It localises to the cytoplasm. The catalysed reaction is tRNA(Ser) + L-serine + ATP = L-seryl-tRNA(Ser) + AMP + diphosphate + H(+). It carries out the reaction tRNA(Sec) + L-serine + ATP = L-seryl-tRNA(Sec) + AMP + diphosphate + H(+). It participates in aminoacyl-tRNA biosynthesis; selenocysteinyl-tRNA(Sec) biosynthesis; L-seryl-tRNA(Sec) from L-serine and tRNA(Sec): step 1/1. In terms of biological role, catalyzes the attachment of serine to tRNA(Ser). Is also able to aminoacylate tRNA(Sec) with serine, to form the misacylated tRNA L-seryl-tRNA(Sec), which will be further converted into selenocysteinyl-tRNA(Sec). In Dichelobacter nodosus (strain VCS1703A), this protein is Serine--tRNA ligase.